We begin with the raw amino-acid sequence, 515 residues long: uncharacterized protein (515 aa).

The disordered stretch occupies residues 146–171 (SSEVDRNSETEGTREENSNTSDWDEQ). The span at 148–162 (EVDRNSETEGTREEN) shows a compositional bias: basic and acidic residues.

It localises to the cytoplasm. The protein resides in the nucleus. This is an uncharacterized protein from Schizosaccharomyces pombe (strain 972 / ATCC 24843) (Fission yeast).